The sequence spans 315 residues: Cobalamin biosynthesis protein CobD (315 aa).

Transmembrane regions (helical) follow at residues 54–74 (GLLF…ILFL), 78–98 (IAYW…LAMT), 152–172 (ADGV…LALM), 203–223 (IANF…SFIL), and 295–315 (LLYT…LLLF).

Belongs to the CobD/CbiB family.

The protein localises to the cell membrane. It participates in cofactor biosynthesis; adenosylcobalamin biosynthesis. Converts cobyric acid to cobinamide by the addition of aminopropanol on the F carboxylic group. The protein is Cobalamin biosynthesis protein CobD of Listeria monocytogenes serotype 4b (strain F2365).